We begin with the raw amino-acid sequence, 487 residues long: GDP-Man:Man(3)GlcNAc(2)-PP-Dol alpha-1,2-mannosyltransferase (487 aa).

At 1-16 the chain is on the lumenal side; the sequence is MAGILCLCGMMRLLTA. The helical transmembrane segment at 17-37 threads the bilayer; it reads LFIPVLIASIGLCLVLVLLFI. Residues 38–231 are Cytoplasmic-facing; the sequence is CTRLWIQRKK…SNNPVLSRLK (194 aa). The helical intramembrane region spans 232–252; that stretch reads LIYYYLFAVIYGWVGSCSDVI. The Cytoplasmic portion of the chain corresponds to 253–394; sequence MVNSTWTFAH…IGLHTMWNEH (142 aa). Positions 395–415 form an intramembrane region, helical; that stretch reads FGIGIVECMAAGTIILAHNSG. At 416-487 the chain is on the cytoplasmic side; sequence GPKLDIVVPY…FLASSEPLFM (72 aa).

This sequence belongs to the glycosyltransferase group 1 family. Glycosyltransferase 4 subfamily.

It localises to the endoplasmic reticulum membrane. The enzyme catalyses an alpha-D-Man-(1-&gt;3)-[alpha-D-Man-(1-&gt;6)]-beta-D-Man-(1-&gt;4)-beta-D-GlcNAc-(1-&gt;4)-alpha-D-GlcNAc-diphospho-di-trans,poly-cis-dolichol + 2 GDP-alpha-D-mannose = an alpha-D-Man-(1-&gt;2)-alpha-D-Man-(1-&gt;2)-alpha-D-Man-(1-&gt;3)-[alpha-D-Man-(1-&gt;6)]-beta-D-Man-(1-&gt;4)-beta-D-GlcNAc-(1-&gt;4)-alpha-D-GlcNAc-diphospho-di-trans,poly-cis-dolichol + 2 GDP + 2 H(+). It functions in the pathway protein modification; protein glycosylation. Its function is as follows. GDP-Man:Man(3)GlcNAc(2)-PP-Dol alpha-1,2-mannosyltransferase that operates in the biosynthetic pathway of dolichol-linked oligosaccharides, the glycan precursors employed in protein asparagine (N)-glycosylation. The assembly of dolichol-linked oligosaccharides begins on the cytosolic side of the endoplasmic reticulum membrane and finishes in its lumen. The sequential addition of sugars to dolichol pyrophosphate produces dolichol-linked oligosaccharides containing fourteen sugars, including two GlcNAcs, nine mannoses and three glucoses. Once assembled, the oligosaccharide is transferred from the lipid to nascent proteins by oligosaccharyltransferases. Catalyzes, on the cytoplasmic face of the endoplasmic reticulum, the addition of the fourth and fifth mannose residues to the dolichol-linked oligosaccharide chain, to produce Man(5)GlcNAc(2)-PP-dolichol core oligosaccharide. Man(5)GlcNAc(2)-PP-dolichol is a substrate for ALG3, the following enzyme in the biosynthetic pathway. This Xenopus tropicalis (Western clawed frog) protein is GDP-Man:Man(3)GlcNAc(2)-PP-Dol alpha-1,2-mannosyltransferase (alg11).